Here is a 238-residue protein sequence, read N- to C-terminus: Monocyte to macrophage differentiation factor (238 aa).

Residues 1–28 (MRFRNRFQRFMNHRAPANGRYKPTCYEH) are Cytoplasmic-facing. Residues 29–49 (AANCYTHAFLIVPAIVGSALL) form a helical membrane-spanning segment. The Lumenal portion of the chain corresponds to 50–61 (HRLSDDCWEKIT). The helical transmembrane segment at 62–82 (AWIYGMGLCALFIVSTVFHIV) threads the bilayer. Residues 83 to 101 (SWKKSHLRTVEHCFHMCDR) are Cytoplasmic-facing. Residues 102–122 (MVIYFFIAASYAPWLNLRELG) form a helical membrane-spanning segment. Pro-123 is a topological domain (lumenal). A helical membrane pass occupies residues 124–144 (LASHMRWFIWLMAAGGTIYVF). At 145-151 (LYHEKYK) the chain is on the cytoplasmic side. Residues 152–172 (VVELFFYLTMGFSPALVVTSM) form a helical membrane-spanning segment. Residues 173–174 (NN) are Lumenal-facing. Residues 175–195 (TDGLQELACGGLIYCLGVVFF) traverse the membrane as a helical segment. Over 196 to 198 (KSD) the chain is Cytoplasmic. The helical transmembrane segment at 199 to 219 (GIIPFAHAIWHLFVATAAAVH) threads the bilayer. Over 220–238 (YYAIWKYLYRSPTDFIRHL) the chain is Lumenal.

It belongs to the ADIPOR family.

The protein resides in the late endosome membrane. The protein localises to the lysosome membrane. Its function is as follows. Involved in the dynamics of lysosomal membranes associated with microglial activation following brain lesion. The polypeptide is Monocyte to macrophage differentiation factor (Mus musculus (Mouse)).